A 440-amino-acid chain; its full sequence is ATP-dependent protease ATPase subunit HslU (440 aa).

ATP is bound by residues Ile18, Gly60 to Glu65, Asp253, Glu318, and Arg390.

This sequence belongs to the ClpX chaperone family. HslU subfamily. In terms of assembly, a double ring-shaped homohexamer of HslV is capped on each side by a ring-shaped HslU homohexamer. The assembly of the HslU/HslV complex is dependent on binding of ATP.

It localises to the cytoplasm. Its function is as follows. ATPase subunit of a proteasome-like degradation complex; this subunit has chaperone activity. The binding of ATP and its subsequent hydrolysis by HslU are essential for unfolding of protein substrates subsequently hydrolyzed by HslV. HslU recognizes the N-terminal part of its protein substrates and unfolds these before they are guided to HslV for hydrolysis. This is ATP-dependent protease ATPase subunit HslU from Shewanella oneidensis (strain ATCC 700550 / JCM 31522 / CIP 106686 / LMG 19005 / NCIMB 14063 / MR-1).